An 83-amino-acid chain; its full sequence is Defensin-like protein 47 (83 aa).

Residues 1 to 27 (MGSTKTLVTCFLVIILAVSLPNNNVLA) form the signal peptide. 4 cysteine pairs are disulfide-bonded: cysteine 40–cysteine 81, cysteine 44–cysteine 68, cysteine 53–cysteine 79, and cysteine 57–cysteine 80.

Belongs to the DEFL family.

The protein resides in the secreted. This chain is Defensin-like protein 47, found in Arabidopsis thaliana (Mouse-ear cress).